A 437-amino-acid polypeptide reads, in one-letter code: Vitellogenin-1 (437 aa).

An N-terminal signal peptide occupies residues 1 to 19 (MNPLKIFCFLALVIAVASA). 2 disordered regions span residues 161–194 (QQQP…ESWK) and 405–437 (PKSP…QNQE). Composition is skewed to polar residues over residues 174 to 184 (GSSQGNQGATS) and 427 to 437 (SWKSGKNQNQE).

The protein belongs to the AB hydrolase superfamily. Lipase family. As to expression, synthesized in the fat body and ovarian follicle cells and accumulate in the oocyte.

It is found in the secreted. Vitellogenin is the major yolk protein of eggs where it is used as a food source during embryogenesis. This is Vitellogenin-1 (VG1-GAMMA) from Ceratitis capitata (Mediterranean fruit fly).